The primary structure comprises 85 residues: Putative membrane protein insertion efficiency factor (85 aa).

The protein belongs to the UPF0161 family.

The protein localises to the cell inner membrane. In terms of biological role, could be involved in insertion of integral membrane proteins into the membrane. In Shewanella woodyi (strain ATCC 51908 / MS32), this protein is Putative membrane protein insertion efficiency factor.